The chain runs to 144 residues: Nucleoside diphosphate kinase (144 aa).

Residues Lys-11, Phe-59, Arg-87, Thr-93, Arg-104, and Asn-114 each coordinate ATP. His-117 serves as the catalytic Pros-phosphohistidine intermediate.

It belongs to the NDK family. As to quaternary structure, homotetramer. Mg(2+) is required as a cofactor.

Its subcellular location is the cytoplasm. It catalyses the reaction a 2'-deoxyribonucleoside 5'-diphosphate + ATP = a 2'-deoxyribonucleoside 5'-triphosphate + ADP. It carries out the reaction a ribonucleoside 5'-diphosphate + ATP = a ribonucleoside 5'-triphosphate + ADP. Its function is as follows. Major role in the synthesis of nucleoside triphosphates other than ATP. The ATP gamma phosphate is transferred to the NDP beta phosphate via a ping-pong mechanism, using a phosphorylated active-site intermediate. This Coxiella burnetii (strain CbuG_Q212) (Coxiella burnetii (strain Q212)) protein is Nucleoside diphosphate kinase.